We begin with the raw amino-acid sequence, 475 residues long: Ribulose bisphosphate carboxylase large chain (475 aa).

Positions 1 to 2 are excised as a propeptide; the sequence is MS. The residue at position 3 (P3) is an N-acetylproline. K14 carries the N6,N6,N6-trimethyllysine modification. Positions 123 and 173 each coordinate substrate. K175 serves as the catalytic Proton acceptor. K177 contributes to the substrate binding site. 3 residues coordinate Mg(2+): K201, D203, and E204. K201 carries the post-translational modification N6-carboxylysine. H294 acts as the Proton acceptor in catalysis. Residues R295, H327, and S379 each contribute to the substrate site.

This sequence belongs to the RuBisCO large chain family. Type I subfamily. In terms of assembly, heterohexadecamer of 8 large chains and 8 small chains; disulfide-linked. The disulfide link is formed within the large subunit homodimers. Requires Mg(2+) as cofactor. Post-translationally, the disulfide bond which can form in the large chain dimeric partners within the hexadecamer appears to be associated with oxidative stress and protein turnover.

Its subcellular location is the plastid. The protein localises to the chloroplast. The catalysed reaction is 2 (2R)-3-phosphoglycerate + 2 H(+) = D-ribulose 1,5-bisphosphate + CO2 + H2O. It catalyses the reaction D-ribulose 1,5-bisphosphate + O2 = 2-phosphoglycolate + (2R)-3-phosphoglycerate + 2 H(+). In terms of biological role, ruBisCO catalyzes two reactions: the carboxylation of D-ribulose 1,5-bisphosphate, the primary event in carbon dioxide fixation, as well as the oxidative fragmentation of the pentose substrate in the photorespiration process. Both reactions occur simultaneously and in competition at the same active site. The sequence is that of Ribulose bisphosphate carboxylase large chain from Alnus incana (White alder).